The primary structure comprises 123 residues: WAP four-disulfide core domain protein 5 (123 aa).

Positions 1–24 are cleaved as a signal peptide; the sequence is MRIQSLLLLGVLLAVGSQLPAAFG. WAP domains lie at 27–73 and 74–121; these read KGEK…CVPR and ISVK…RDPA. Intrachain disulfides connect Cys-34–Cys-62, Cys-41–Cys-66, Cys-49–Cys-61, Cys-55–Cys-70, Cys-81–Cys-109, Cys-88–Cys-113, Cys-96–Cys-108, and Cys-102–Cys-117.

The protein localises to the secreted. In terms of biological role, putative acid-stable proteinase inhibitor. This is WAP four-disulfide core domain protein 5 (WFDC5) from Callithrix jacchus (White-tufted-ear marmoset).